A 143-amino-acid chain; its full sequence is Transcriptional regulator MraZ (143 aa).

SpoVT-AbrB domains lie at 5-47 (EYQH…PLNE) and 76-119 (ATEC…SDER).

Belongs to the MraZ family. In terms of assembly, forms oligomers.

Its subcellular location is the cytoplasm. The protein resides in the nucleoid. This chain is Transcriptional regulator MraZ, found in Enterococcus faecalis (strain ATCC 700802 / V583).